The following is an 876-amino-acid chain: Translation initiation factor IF-2 (876 aa).

The disordered stretch occupies residues 164 to 288 (VEIKEPEEPA…EEPAPHAFSA (125 aa)). The segment covering 179 to 219 (AAPVAGPEAVPVAPETPSAAPGETVAAVEAEAAPSQPASTE) has biased composition (low complexity). The span at 244–259 (VWKEEKVEKRGLKTRG) shows a compositional bias: basic and acidic residues. In terms of domain architecture, tr-type G spans 378 to 547 (ARAPVVTVMG…LLQAEVLELK (170 aa)). Positions 387-394 (GHVDHGKT) are G1. 387–394 (GHVDHGKT) provides a ligand contact to GTP. Residues 412–416 (GITQH) form a G2 region. The G3 stretch occupies residues 433-436 (DTPG). Residues 433 to 437 (DTPGH) and 487 to 490 (TKID) each bind GTP. Residues 487 to 490 (TKID) are G4. A G5 region spans residues 523–525 (SAK).

It belongs to the TRAFAC class translation factor GTPase superfamily. Classic translation factor GTPase family. IF-2 subfamily.

It is found in the cytoplasm. Its function is as follows. One of the essential components for the initiation of protein synthesis. Protects formylmethionyl-tRNA from spontaneous hydrolysis and promotes its binding to the 30S ribosomal subunits. Also involved in the hydrolysis of GTP during the formation of the 70S ribosomal complex. The chain is Translation initiation factor IF-2 from Nitrosospira multiformis (strain ATCC 25196 / NCIMB 11849 / C 71).